A 730-amino-acid polypeptide reads, in one-letter code: Polyphosphate kinase (730 aa).

The span at 1–21 (MMRHDRNVTEIDAETRPDENL) shows a compositional bias: basic and acidic residues. The interval 1 to 39 (MMRHDRNVTEIDAETRPDENLWHSGDSAVGAPPAATPAA) is disordered. Asparagine 86 contributes to the ATP binding site. Arginine 423 and arginine 453 together coordinate Mg(2+). The active-site Phosphohistidine intermediate is the histidine 483. ATP is bound by residues tyrosine 516, arginine 612, and histidine 640.

This sequence belongs to the polyphosphate kinase 1 (PPK1) family. It depends on Mg(2+) as a cofactor. In terms of processing, an intermediate of this reaction is the autophosphorylated ppk in which a phosphate is covalently linked to a histidine residue through a N-P bond.

The catalysed reaction is [phosphate](n) + ATP = [phosphate](n+1) + ADP. Its function is as follows. Catalyzes the reversible transfer of the terminal phosphate of ATP to form a long-chain polyphosphate (polyP). In Mycobacterium avium (strain 104), this protein is Polyphosphate kinase.